The sequence spans 428 residues: Serine--tRNA ligase (428 aa).

Residue 235–237 (TAE) participates in L-serine binding. 266–268 (RSE) is an ATP binding site. Position 289 (glutamate 289) interacts with L-serine. 353–356 (EISS) is a binding site for ATP. Serine 389 serves as a coordination point for L-serine.

This sequence belongs to the class-II aminoacyl-tRNA synthetase family. Type-1 seryl-tRNA synthetase subfamily. Homodimer. The tRNA molecule binds across the dimer.

Its subcellular location is the cytoplasm. It carries out the reaction tRNA(Ser) + L-serine + ATP = L-seryl-tRNA(Ser) + AMP + diphosphate + H(+). The catalysed reaction is tRNA(Sec) + L-serine + ATP = L-seryl-tRNA(Sec) + AMP + diphosphate + H(+). The protein operates within aminoacyl-tRNA biosynthesis; selenocysteinyl-tRNA(Sec) biosynthesis; L-seryl-tRNA(Sec) from L-serine and tRNA(Sec): step 1/1. In terms of biological role, catalyzes the attachment of serine to tRNA(Ser). Is also able to aminoacylate tRNA(Sec) with serine, to form the misacylated tRNA L-seryl-tRNA(Sec), which will be further converted into selenocysteinyl-tRNA(Sec). The sequence is that of Serine--tRNA ligase from Psychromonas ingrahamii (strain DSM 17664 / CCUG 51855 / 37).